A 121-amino-acid polypeptide reads, in one-letter code: Large ribosomal subunit protein bL19 (121 aa).

It belongs to the bacterial ribosomal protein bL19 family.

Functionally, this protein is located at the 30S-50S ribosomal subunit interface and may play a role in the structure and function of the aminoacyl-tRNA binding site. The chain is Large ribosomal subunit protein bL19 (rplS) from Chlamydia muridarum (strain MoPn / Nigg).